A 611-amino-acid polypeptide reads, in one-letter code: Inhibitor of apoptosis protein (611 aa).

BIR repeat units follow at residues 30–97 (ELYR…CSFV), 176–242 (EEAR…CPFV), and 262–329 (HEAR…CEYL). Residues Cys299, Cys302, His319, and Cys326 each contribute to the Zn(2+) site. One can recognise a CARD domain in the interval 446–536 (VASDDLSLIR…VLYKDLFVEK (91 aa)). The segment at 564–599 (CKVCMDKEVSIVFIPCGHLVVCKECAPSLRKCPICR) adopts an RING-type zinc-finger fold.

This sequence belongs to the IAP family. Cells of the T-lymphocyte lineage. Found in both cortical and medullary cells of the thymus. Expressed at relatively high levels also in spleen, bursa, intestine and lung and at very low levels in testis, brain and skeletal muscle.

Its subcellular location is the nucleus. It localises to the cytoplasm. Functionally, apoptotic suppressor. This is Inhibitor of apoptosis protein (ITA) from Gallus gallus (Chicken).